An 83-amino-acid polypeptide reads, in one-letter code: EMBRYO SURROUNDING FACTOR 1.1 (83 aa).

The N-terminal stretch at 1–22 is a signal peptide; it reads MKSSHTSLICILMLSLVALHQC. 4 cysteine pairs are disulfide-bonded: Cys-41-Cys-56, Cys-46-Cys-75, Cys-54-Cys-71, and Cys-57-Cys-64.

This sequence belongs to the MEG family. In terms of tissue distribution, expressed exclusively in ovule embryo sacs and in early developing endosperms.

Maternally-contributed central cell peptide regulating suspensor development and correct auxin distribution in early developing embryos. This is EMBRYO SURROUNDING FACTOR 1.1 (ESF1.1) from Arabidopsis thaliana (Mouse-ear cress).